Reading from the N-terminus, the 678-residue chain is MEVLIGDPITTCLSPSVYDIICNLGFQLRENCDINSIVTQNGEVCWKTITDCVSYTESEQGLDYWGSVRLLGPVCEAVHSHFLSLTKGQFEIRYAPWFQWTSFPELFPEIFDALESLQSPAISLSLMKLTSCLERALGDVFLLIGKECPFLLRDLLSSEELAQVFSQSVMNVLKVFVGSPCGLNLRNVLWHGFASPEEIPPKYCSMMILLTAGLGQLLKSYLQNTKLTLAHRSFISLTNLEDLIVFPDVTYEVLSVLEEVMMKSAFILKIMLPYWEVALVKFKSHRFADCAILLLTQLETGLRNVFATLNRCPKRLLTAESTALYTTFDQILAKHLNDGKINQLPLFLGEPAMEFLWDFLNHQEGPRIRDHLSHGEINLHEFSKETTNQLLAFSLVLLLRFVDDCLLSVFKEKSAVELLISLAEGYSSRCHPVFQLKKQVLSCEESIRVWALLPFPEELTRQAVRLEDNSETNACHSLITKMTDELYHHMPENRCVLKDLDRLPTETWPQLLRELCSTPVPTLFCPRIVLEVLVVLRSISEQCRRVSSQVTVASELRHRQWVERTLRSRQRQNYLRMWSSIRLLSPVLSLILLLIALELVNIHAVCGKNAHEYQQYLKFVKSILQYTENLVAYTSYEKNKWNETINLTHTALLKMWTFSEKKQMLIHLAKKSTSKVLL.

The next 2 helical transmembrane spans lie at L390–F410 and V587–G607.

The protein localises to the endoplasmic reticulum membrane. In terms of biological role, may play a role in neuronal migration during embryonic development. This is Endoplasmic reticulum membrane-associated RNA degradation protein (ERMARD) from Homo sapiens (Human).